Consider the following 514-residue polypeptide: ATP synthase subunit alpha (514 aa).

170–177 (GDRQIGKT) lines the ATP pocket.

The protein belongs to the ATPase alpha/beta chains family. In terms of assembly, F-type ATPases have 2 components, CF(1) - the catalytic core - and CF(0) - the membrane proton channel. CF(1) has five subunits: alpha(3), beta(3), gamma(1), delta(1), epsilon(1). CF(0) has three main subunits: a(1), b(2) and c(9-12). The alpha and beta chains form an alternating ring which encloses part of the gamma chain. CF(1) is attached to CF(0) by a central stalk formed by the gamma and epsilon chains, while a peripheral stalk is formed by the delta and b chains.

Its subcellular location is the cell inner membrane. It catalyses the reaction ATP + H2O + 4 H(+)(in) = ADP + phosphate + 5 H(+)(out). Its function is as follows. Produces ATP from ADP in the presence of a proton gradient across the membrane. The alpha chain is a regulatory subunit. The chain is ATP synthase subunit alpha from Pseudomonas entomophila (strain L48).